A 677-amino-acid polypeptide reads, in one-letter code: UvrABC system protein B (677 aa).

Positions 25–412 (QGVNGGERYQ…GGEVAQQVIR (388 aa)) constitute a Helicase ATP-binding domain. An ATP-binding site is contributed by 38–45 (GATGTGKT). The short motif at 91 to 114 (YYDYYQPEAYVPVSDTYIAKTASI) is the Beta-hairpin element. The Helicase C-terminal domain maps to 429 to 591 (QVDDLLGEIR…IVPTAAGKKA (163 aa)). The UVR domain maps to 639–674 (PELIDQLEGKMKEAAKKLDFEDAANLRDRIKQLRQK).

The protein belongs to the UvrB family. As to quaternary structure, forms a heterotetramer with UvrA during the search for lesions. Interacts with UvrC in an incision complex.

The protein resides in the cytoplasm. In terms of biological role, the UvrABC repair system catalyzes the recognition and processing of DNA lesions. A damage recognition complex composed of 2 UvrA and 2 UvrB subunits scans DNA for abnormalities. Upon binding of the UvrA(2)B(2) complex to a putative damaged site, the DNA wraps around one UvrB monomer. DNA wrap is dependent on ATP binding by UvrB and probably causes local melting of the DNA helix, facilitating insertion of UvrB beta-hairpin between the DNA strands. Then UvrB probes one DNA strand for the presence of a lesion. If a lesion is found the UvrA subunits dissociate and the UvrB-DNA preincision complex is formed. This complex is subsequently bound by UvrC and the second UvrB is released. If no lesion is found, the DNA wraps around the other UvrB subunit that will check the other stand for damage. The polypeptide is UvrABC system protein B (Parasynechococcus marenigrum (strain WH8102)).